Here is a 1611-residue protein sequence, read N- to C-terminus: Non-structural polyprotein 1AB (1611 aa).

The stretch at 124–187 forms a coiled coil; that stretch reads TTSNLIARAM…ELHLLKELGK (64 aa). Transmembrane regions (helical) follow at residues 195–215, 329–348, 353–373, 375–395, 397–417, 426–446, and 450–470; these read AFSF…LHYT, ISYY…ALAT, MVMV…PITV, IASV…LVFP, FLPY…FFSS, VSTA…VIVL, and SIPM…SVGV. Catalysis depends on charge relay system; for serine protease activity residues H550, D582, and S647. Y833 carries the post-translational modification O-(5'-phospho-RNA)-tyrosine. The RdRp catalytic domain maps to 1352 to 1486; the sequence is RYYVELDWTR…AVDKRFINSY (135 aa).

This sequence belongs to the astroviridae polyprotein 1AB family. In terms of assembly, monomer. Cleaved by the viral and host proteases. The protease is probably autocatalytically cleaved.

It is found in the host membrane. The catalysed reaction is RNA(n) + a ribonucleoside 5'-triphosphate = RNA(n+1) + diphosphate. Its function is as follows. Responsible for the cleavage of the polyprotein into functional products. Functionally, protein covalently attached to the 5' extremity of the genomic and subgenomic RNAs. It may serve as a primer for the replicase. The protein is Non-structural polyprotein 1AB (ORF1) of Turkey astrovirus 1 (TAstV-1).